Reading from the N-terminus, the 319-residue chain is Probable NAD(P)H-dependent D-xylose reductase xyl1 (319 aa).

The Proton donor role is filled by Tyr-50. Substrate is bound at residue His-112. NAD(+)-binding positions include Ser-166 to Asn-167, Ser-215 to Glu-224, and Lys-271 to Asn-281.

This sequence belongs to the aldo/keto reductase family.

It catalyses the reaction xylitol + NAD(+) = D-xylose + NADH + H(+). The enzyme catalyses xylitol + NADP(+) = D-xylose + NADPH + H(+). The protein operates within carbohydrate metabolism; D-xylose degradation. In terms of biological role, catalyzes the initial reaction in the xylose utilization pathway by reducing D-xylose into xylitol. Xylose is a major component of hemicelluloses such as xylan. Most fungi utilize D-xylose via three enzymatic reactions, xylose reductase (XR), xylitol dehydrogenase (XDH), and xylulokinase, to form xylulose 5-phosphate, which enters pentose phosphate pathway. The chain is Probable NAD(P)H-dependent D-xylose reductase xyl1 (xyl1) from Aspergillus oryzae (strain ATCC 42149 / RIB 40) (Yellow koji mold).